A 542-amino-acid chain; its full sequence is Phosphoacetylglucosamine mutase (542 aa).

M1 bears the N-acetylmethionine mark. The residue at position 62 (T62) is a Phosphothreonine. S64 functions as the Phosphoserine intermediate in the catalytic mechanism. Mg(2+)-binding residues include S64, D276, D278, and D280. S64 is subject to Phosphoserine. Residues 370-372, 496-500, and R505 contribute to the substrate site; these read EAN and RPSGT.

This sequence belongs to the phosphohexose mutase family. The cofactor is Mg(2+).

The enzyme catalyses N-acetyl-alpha-D-glucosamine 1-phosphate = N-acetyl-D-glucosamine 6-phosphate. It functions in the pathway nucleotide-sugar biosynthesis; UDP-N-acetyl-alpha-D-glucosamine biosynthesis; N-acetyl-alpha-D-glucosamine 1-phosphate from alpha-D-glucosamine 6-phosphate (route I): step 2/2. Functionally, catalyzes the conversion of GlcNAc-6-P into GlcNAc-1-P during the synthesis of uridine diphosphate/UDP-GlcNAc, a sugar nucleotide critical to multiple glycosylation pathways including protein N- and O-glycosylation. The sequence is that of Phosphoacetylglucosamine mutase from Mus musculus (Mouse).